Here is a 389-residue protein sequence, read N- to C-terminus: uncharacterized protein (389 aa).

Residues 1–12 are compositionally biased toward polar residues; it reads MVHATSQSASTE. 2 disordered regions span residues 1–49 and 86–111; these read MVHA…DEDL and HKSM…ANRA. A compositionally biased stretch (acidic residues) spans 40–49; the sequence is ESGDEYDEDL. Residues 93–110 are compositionally biased toward basic residues; it reads RGKKKRGKTAKKAKKANR.

This is an uncharacterized protein from Caenorhabditis elegans.